Reading from the N-terminus, the 173-residue chain is MEIKDLQDYVAIVNDWPKKGIVFKDITPLMNDGEAYRFATDKIVEYAKELKIDIIVGPEARGFIIGCPVAYALGIGFAPVRKPGKLPRETIEMEYDLEYGTNKLSMHSDAIKPGQRVLITDDLLATGGTIEATIKLVEELGGIVAGCAFLIELKELEGHKKLNGYDRLILMQL.

Belongs to the purine/pyrimidine phosphoribosyltransferase family. As to quaternary structure, homodimer.

The protein localises to the cytoplasm. It carries out the reaction AMP + diphosphate = 5-phospho-alpha-D-ribose 1-diphosphate + adenine. It participates in purine metabolism; AMP biosynthesis via salvage pathway; AMP from adenine: step 1/1. In terms of biological role, catalyzes a salvage reaction resulting in the formation of AMP, that is energically less costly than de novo synthesis. This chain is Adenine phosphoribosyltransferase, found in Listeria monocytogenes serotype 4b (strain CLIP80459).